A 190-amino-acid polypeptide reads, in one-letter code: Endoribonuclease YbeY (190 aa).

A disordered region spans residues 1-20 (MDVENDRPPRRGAAGERNSG). 3 residues coordinate Zn(2+): histidine 147, histidine 151, and histidine 157.

Belongs to the endoribonuclease YbeY family. Zn(2+) serves as cofactor.

It is found in the cytoplasm. Its function is as follows. Single strand-specific metallo-endoribonuclease involved in late-stage 70S ribosome quality control and in maturation of the 3' terminus of the 16S rRNA. This Nitrobacter hamburgensis (strain DSM 10229 / NCIMB 13809 / X14) protein is Endoribonuclease YbeY.